The primary structure comprises 459 residues: Putrescine aminotransferase (459 aa).

Pyridoxal 5'-phosphate is bound by residues 150–151 (GT) and Gln-274. Lys-300 bears the N6-(pyridoxal phosphate)lysine mark. Thr-332 is a pyridoxal 5'-phosphate binding site.

Belongs to the class-III pyridoxal-phosphate-dependent aminotransferase family. Putrescine aminotransferase subfamily. The cofactor is pyridoxal 5'-phosphate.

It catalyses the reaction an alkane-alpha,omega-diamine + 2-oxoglutarate = an omega-aminoaldehyde + L-glutamate. It carries out the reaction putrescine + 2-oxoglutarate = 1-pyrroline + L-glutamate + H2O. The enzyme catalyses cadaverine + 2-oxoglutarate = 5-aminopentanal + L-glutamate. It functions in the pathway amine and polyamine degradation; putrescine degradation; 4-aminobutanal from putrescine (transaminase route): step 1/1. In terms of biological role, catalyzes the aminotransferase reaction from putrescine to 2-oxoglutarate, leading to glutamate and 4-aminobutanal, which spontaneously cyclizes to form 1-pyrroline. This is the first step in one of two pathways for putrescine degradation, where putrescine is converted into 4-aminobutanoate (gamma-aminobutyrate or GABA) via 4-aminobutanal. Also functions as a cadaverine transaminase in a a L-lysine degradation pathway to succinate that proceeds via cadaverine, glutarate and L-2-hydroxyglutarate. This chain is Putrescine aminotransferase, found in Escherichia coli O81 (strain ED1a).